Reading from the N-terminus, the 91-residue chain is Acylphosphatase (91 aa).

The region spanning 3–91 (TVTMKVTGLV…EKFTRFSVVY (89 aa)) is the Acylphosphatase-like domain. Residues R18 and N36 contribute to the active site.

Belongs to the acylphosphatase family.

The catalysed reaction is an acyl phosphate + H2O = a carboxylate + phosphate + H(+). The sequence is that of Acylphosphatase (acyP) from Lactobacillus gasseri (strain ATCC 33323 / DSM 20243 / BCRC 14619 / CIP 102991 / JCM 1131 / KCTC 3163 / NCIMB 11718 / NCTC 13722 / AM63).